The sequence spans 521 residues: Glutamate--cysteine ligase (521 aa).

It belongs to the glutamate--cysteine ligase type 1 family. Type 1 subfamily.

The catalysed reaction is L-cysteine + L-glutamate + ATP = gamma-L-glutamyl-L-cysteine + ADP + phosphate + H(+). It participates in sulfur metabolism; glutathione biosynthesis; glutathione from L-cysteine and L-glutamate: step 1/2. The chain is Glutamate--cysteine ligase from Aliivibrio salmonicida (strain LFI1238) (Vibrio salmonicida (strain LFI1238)).